A 488-amino-acid chain; its full sequence is Gamma-aminobutyric acid receptor subunit beta-4 (488 aa).

A signal peptide spans 1–25; that stretch reads MWTFQADRLSGIVSALAALCVACCA. At 26-244 the chain is on the extracellular side; it reads QSPSTGNISV…SFRIKRNIGY (219 aa). Residues Asn32, Asn104, Asn173, and Asn195 are each glycosylated (N-linked (GlcNAc...) asparagine). Cysteines 160 and 174 form a disulfide. 3 helical membrane-spanning segments follow: residues 245 to 266, 271 to 292, and 304 to 326; these read FILQTYMPSILITILSWVSFWI, SAARVALGVTTVLTMTTINTHL, and AIDVYLMGCFVFVFLALLEYAFV. The Cytoplasmic segment spans residues 327–465; the sequence is NYIFFGRGPR…DLTDVSTIDK (139 aa). Residues 466-487 traverse the membrane as a helical segment; the sequence is WSRIIFPITFGFFNLVYWLYYV.

This sequence belongs to the ligand-gated ion channel (TC 1.A.9) family. Gamma-aminobutyric acid receptor (TC 1.A.9.5) subfamily. GABRB4 sub-subfamily. Generally pentameric. There are five types of GABA(A) receptor chains: alpha, beta, gamma, delta, and rho.

The protein localises to the postsynaptic cell membrane. It is found in the cell membrane. GABA, the major inhibitory neurotransmitter in the vertebrate brain, mediates neuronal inhibition by binding to the GABA/benzodiazepine receptor and opening an integral chloride channel. This is Gamma-aminobutyric acid receptor subunit beta-4 (GABRB4) from Gallus gallus (Chicken).